The sequence spans 590 residues: Multidrug resistance ABC transporter ATP-binding and permease protein (590 aa).

6 consecutive transmembrane segments (helical) span residues 35–55 (YLFF…QLQV), 79–99 (IALY…LGIF), 150–170 (IPQA…MLQM), 176–196 (LAMI…MTFG), 261–281 (VMML…IYLI), and 292–312 (LGMM…ATFF). One can recognise an ABC transmembrane type-1 domain in the interval 38 to 317 (FVIGIVAGII…VATFFTELAK (280 aa)). The ABC transporter domain occupies 349-584 (LSAHHVDFAY…HPLYAKYVSE (236 aa)). Position 382-389 (382-389 (GPSGGGKS)) interacts with ATP.

The protein belongs to the ABC transporter superfamily. Multidrug exporter LmrA (TC 3.A.1.117.1) family. In terms of assembly, homodimer.

The protein resides in the cell membrane. The enzyme catalyses ATP + H2O + xenobioticSide 1 = ADP + phosphate + xenobioticSide 2.. Its function is as follows. Efflux transporter for a variety of amphiphilic cationic compounds, including antibiotics. The chain is Multidrug resistance ABC transporter ATP-binding and permease protein (lmrA) from Lactococcus lactis subsp. cremoris (strain MG1363).